The sequence spans 937 residues: Isoleucine--tRNA ligase (937 aa).

Positions 58–68 (PYANGSIHIGH) match the 'HIGH' region motif. An L-isoleucyl-5'-AMP-binding site is contributed by Glu-561. The 'KMSKS' region signature appears at 602–606 (KMSKS). Lys-605 provides a ligand contact to ATP. Zn(2+) is bound by residues Cys-900, Cys-903, Cys-920, and Cys-923.

Belongs to the class-I aminoacyl-tRNA synthetase family. IleS type 1 subfamily. In terms of assembly, monomer. It depends on Zn(2+) as a cofactor.

The protein resides in the cytoplasm. It carries out the reaction tRNA(Ile) + L-isoleucine + ATP = L-isoleucyl-tRNA(Ile) + AMP + diphosphate. Catalyzes the attachment of isoleucine to tRNA(Ile). As IleRS can inadvertently accommodate and process structurally similar amino acids such as valine, to avoid such errors it has two additional distinct tRNA(Ile)-dependent editing activities. One activity is designated as 'pretransfer' editing and involves the hydrolysis of activated Val-AMP. The other activity is designated 'posttransfer' editing and involves deacylation of mischarged Val-tRNA(Ile). The protein is Isoleucine--tRNA ligase of Pectobacterium carotovorum subsp. carotovorum (strain PC1).